Here is a 595-residue protein sequence, read N- to C-terminus: Putative laccase-18 (595 aa).

Residues 1 to 29 (MEKLSTAASLFGVVVAATALAMAVVGGEA) form the signal peptide. 2 consecutive Plastocyanin-like domains span residues 37–153 (MVHE…PRDG) and 162–316 (KDVP…YTGA). Residues Asn42 and Asn48 are each glycosylated (N-linked (GlcNAc...) asparagine). Residues His87 and His89 each coordinate Cu cation. N-linked (GlcNAc...) asparagine glycosylation occurs at Asn121. Cu cation-binding residues include His132 and His134. N-linked (GlcNAc...) asparagine glycosylation is found at Asn206, Asn345, Asn382, Asn402, Asn409, Asn439, and Asn470. The Plastocyanin-like 3 domain occupies 429–571 (DFPVRPPRPF…ATAFIVEDGP (143 aa)). Asn488, His491, His493, His550, Cys551, His552, His556, and Met561 together coordinate Cu cation. The disordered stretch occupies residues 570 to 595 (GPTPETSLPPPPPEFKRCGTNGLSQP).

This sequence belongs to the multicopper oxidase family. Requires Cu cation as cofactor.

The protein localises to the secreted. Its subcellular location is the extracellular space. The protein resides in the apoplast. It catalyses the reaction 4 hydroquinone + O2 = 4 benzosemiquinone + 2 H2O. Its function is as follows. Lignin degradation and detoxification of lignin-derived products. The protein is Putative laccase-18 (LAC18) of Oryza sativa subsp. indica (Rice).